Reading from the N-terminus, the 173-residue chain is DNA-directed RNA polymerase subunit delta (173 aa).

Positions 14–81 (MALVEIAHEL…SDQTWGLRSW (68 aa)) constitute an HTH HARE-type domain. Residues 110-173 (LDLDEFEEID…DYDDEEEEIK (64 aa)) are disordered.

It belongs to the RpoE family. RNAP is composed of a core of 2 alpha, a beta and a beta' subunit. The core is associated with a delta subunit, and at least one of epsilon or omega. When a sigma factor is associated with the core the holoenzyme is formed, which can initiate transcription.

Its function is as follows. Participates in both the initiation and recycling phases of transcription. In the presence of the delta subunit, RNAP displays an increased specificity of transcription, a decreased affinity for nucleic acids, and an increased efficiency of RNA synthesis because of enhanced recycling. May function in sigma factor switching. It displaces RNA bound to RNA polymerase in a binary complex. In Bacillus subtilis (strain 168), this protein is DNA-directed RNA polymerase subunit delta.